A 478-amino-acid chain; its full sequence is Sulfate adenylyltransferase subunit 1 (478 aa).

Residues 28–244 (KTMLRFLTCG…LESVDVVNAS (217 aa)) enclose the tr-type G domain. The tract at residues 37–44 (GSVDDGKS) is G1. 37 to 44 (GSVDDGKS) serves as a coordination point for GTP. The tract at residues 95–99 (GITID) is G2. The segment at 116–119 (DTPG) is G3. Residues 116-120 (DTPGH) and 171-174 (NKMD) contribute to the GTP site. A G4 region spans residues 171–174 (NKMD). The segment at 209-211 (SAL) is G5.

This sequence belongs to the TRAFAC class translation factor GTPase superfamily. Classic translation factor GTPase family. CysN/NodQ subfamily. As to quaternary structure, heterodimer composed of CysD, the smaller subunit, and CysN.

It catalyses the reaction sulfate + ATP + H(+) = adenosine 5'-phosphosulfate + diphosphate. It participates in sulfur metabolism; hydrogen sulfide biosynthesis; sulfite from sulfate: step 1/3. With CysD forms the ATP sulfurylase (ATPS) that catalyzes the adenylation of sulfate producing adenosine 5'-phosphosulfate (APS) and diphosphate, the first enzymatic step in sulfur assimilation pathway. APS synthesis involves the formation of a high-energy phosphoric-sulfuric acid anhydride bond driven by GTP hydrolysis by CysN coupled to ATP hydrolysis by CysD. This is Sulfate adenylyltransferase subunit 1 from Yersinia enterocolitica serotype O:8 / biotype 1B (strain NCTC 13174 / 8081).